A 177-amino-acid chain; its full sequence is Probable adenylyl-sulfate kinase (177 aa).

12–19 serves as a coordination point for ATP; it reads GLSGAGKT. Catalysis depends on Ser86, which acts as the Phosphoserine intermediate.

The protein belongs to the APS kinase family.

The enzyme catalyses adenosine 5'-phosphosulfate + ATP = 3'-phosphoadenylyl sulfate + ADP + H(+). The protein operates within sulfur metabolism; hydrogen sulfide biosynthesis; sulfite from sulfate: step 2/3. Its function is as follows. Catalyzes the synthesis of activated sulfate. In Synechocystis sp. (strain ATCC 27184 / PCC 6803 / Kazusa), this protein is Probable adenylyl-sulfate kinase (cysC).